The following is a 765-amino-acid chain: LPS-assembly protein LptD (765 aa).

An N-terminal signal peptide occupies residues 1-18 (MQIRYLLALSLLPKLVLA).

It belongs to the LptD family. In terms of assembly, component of the lipopolysaccharide transport and assembly complex. Interacts with LptE and LptA.

Its subcellular location is the cell outer membrane. Functionally, together with LptE, is involved in the assembly of lipopolysaccharide (LPS) at the surface of the outer membrane. The sequence is that of LPS-assembly protein LptD from Shewanella oneidensis (strain ATCC 700550 / JCM 31522 / CIP 106686 / LMG 19005 / NCIMB 14063 / MR-1).